The sequence spans 330 residues: Aspartate--ammonia ligase (330 aa).

Belongs to the class-II aminoacyl-tRNA synthetase family. AsnA subfamily.

It localises to the cytoplasm. The enzyme catalyses L-aspartate + NH4(+) + ATP = L-asparagine + AMP + diphosphate + H(+). It functions in the pathway amino-acid biosynthesis; L-asparagine biosynthesis; L-asparagine from L-aspartate (ammonia route): step 1/1. The polypeptide is Aspartate--ammonia ligase (Aeromonas salmonicida (strain A449)).